Reading from the N-terminus, the 206-residue chain is Small ribosomal subunit protein uS4B (206 aa).

The 61-residue stretch at 96-156 folds into the S4 RNA-binding domain; the sequence is GRLDNVVYRM…EKAKKQSRIG (61 aa).

Belongs to the universal ribosomal protein uS4 family. As to quaternary structure, part of the 30S ribosomal subunit. Contacts protein S5. The interaction surface between S4 and S5 is involved in control of translational fidelity.

Functionally, one of the primary rRNA binding proteins, it binds directly to 16S rRNA where it nucleates assembly of the body of the 30S subunit. Its function is as follows. With S5 and S12 plays an important role in translational accuracy. This chain is Small ribosomal subunit protein uS4B, found in Psychromonas ingrahamii (strain DSM 17664 / CCUG 51855 / 37).